We begin with the raw amino-acid sequence, 62 residues long: Ribulose bisphosphate carboxylase/oxygenase activase, chloroplastic (62 aa).

The protein belongs to the RuBisCO activase family.

The protein localises to the plastid. It localises to the chloroplast stroma. Its function is as follows. Activation of RuBisCO (ribulose-1,5-bisphosphate carboxylase/oxygenase; EC 4.1.1.39) involves the ATP-dependent carboxylation of the epsilon-amino group of lysine leading to a carbamate structure. This Vitis sp. (Grape) protein is Ribulose bisphosphate carboxylase/oxygenase activase, chloroplastic.